The chain runs to 351 residues: Photosystem II D2 protein (351 aa).

A helical membrane pass occupies residues 39-59 (TAYLAAGGWFTGTTFVTSWYT). Residue His-116 participates in chlorophyll a binding. Residues 123–139 (GFCLRQFEIARLVGIRP) traverse the membrane as a helical segment. Residues Gln-128 and Asn-141 each contribute to the pheophytin a site. A helical membrane pass occupies residues 151–164 (VFVSVFLLYPLGQA). His-196 serves as a coordination point for chlorophyll a. A helical membrane pass occupies residues 206-226 (GALLCAIHGATVENTLFEDGD). The a plastoquinone site is built by His-213 and Phe-260. A Fe cation-binding site is contributed by His-213. Residue His-267 participates in Fe cation binding. Residues 277-293 (GLWTSSIGIVGLALNLR) traverse the membrane as a helical segment.

It belongs to the reaction center PufL/M/PsbA/D family. PSII is composed of 1 copy each of membrane proteins PsbA, PsbB, PsbC, PsbD, PsbE, PsbF, PsbH, PsbI, PsbJ, PsbK, PsbL, PsbM, PsbT, PsbX, PsbY, PsbZ, Psb30/Ycf12, at least 3 peripheral proteins of the oxygen-evolving complex and a large number of cofactors. It forms dimeric complexes. The cofactor is The D1/D2 heterodimer binds P680, chlorophylls that are the primary electron donor of PSII, and subsequent electron acceptors. It shares a non-heme iron and each subunit binds pheophytin, quinone, additional chlorophylls, carotenoids and lipids. There is also a Cl(-1) ion associated with D1 and D2, which is required for oxygen evolution. The PSII complex binds additional chlorophylls, carotenoids and specific lipids..

It is found in the plastid. It localises to the chloroplast thylakoid membrane. The enzyme catalyses 2 a plastoquinone + 4 hnu + 2 H2O = 2 a plastoquinol + O2. Photosystem II (PSII) is a light-driven water:plastoquinone oxidoreductase that uses light energy to abstract electrons from H(2)O, generating O(2) and a proton gradient subsequently used for ATP formation. It consists of a core antenna complex that captures photons, and an electron transfer chain that converts photonic excitation into a charge separation. The D1/D2 (PsbA/PsbD) reaction center heterodimer binds P680, the primary electron donor of PSII as well as several subsequent electron acceptors. D2 is needed for assembly of a stable PSII complex. This is Photosystem II D2 protein from Thalassiosira pseudonana (Marine diatom).